A 224-amino-acid polypeptide reads, in one-letter code: Large ribosomal subunit protein bL25 (224 aa).

A disordered region spans residues Val-196 to Glu-224. Residues Glu-197–Ala-208 show a composition bias toward acidic residues.

Belongs to the bacterial ribosomal protein bL25 family. CTC subfamily. As to quaternary structure, part of the 50S ribosomal subunit; part of the 5S rRNA/L5/L18/L25 subcomplex. Contacts the 5S rRNA. Binds to the 5S rRNA independently of L5 and L18.

This is one of the proteins that binds to the 5S RNA in the ribosome where it forms part of the central protuberance. The protein is Large ribosomal subunit protein bL25 of Psychrobacter sp. (strain PRwf-1).